A 424-amino-acid polypeptide reads, in one-letter code: UDP-N-acetylglucosamine 1-carboxyvinyltransferase (424 aa).

22-23 lines the phosphoenolpyruvate pocket; it reads KN. A UDP-N-acetyl-alpha-D-glucosamine-binding site is contributed by Arg93. Cys117 acts as the Proton donor in catalysis. Position 117 is a 2-(S-cysteinyl)pyruvic acid O-phosphothioketal (Cys117). UDP-N-acetyl-alpha-D-glucosamine-binding positions include 122 to 126, 162 to 165, Asp307, and Ile329; these read RPVDL and KVSV.

It belongs to the EPSP synthase family. MurA subfamily.

The protein localises to the cytoplasm. The catalysed reaction is phosphoenolpyruvate + UDP-N-acetyl-alpha-D-glucosamine = UDP-N-acetyl-3-O-(1-carboxyvinyl)-alpha-D-glucosamine + phosphate. The protein operates within cell wall biogenesis; peptidoglycan biosynthesis. Its function is as follows. Cell wall formation. Adds enolpyruvyl to UDP-N-acetylglucosamine. This chain is UDP-N-acetylglucosamine 1-carboxyvinyltransferase, found in Haemophilus influenzae (strain 86-028NP).